The chain runs to 98 residues: MTAKPEHYDVIRKPVITEKATMTSEANGVVFAVAMDATKPQIKEAVEAIFNVKVKAVNTTITKGKTKKFKGRPGVRSDRKKAYVTLEEGNTIDVSTGL.

Belongs to the universal ribosomal protein uL23 family. Part of the 50S ribosomal subunit. Contacts protein L29, and trigger factor when it is bound to the ribosome.

Functionally, one of the early assembly proteins it binds 23S rRNA. One of the proteins that surrounds the polypeptide exit tunnel on the outside of the ribosome. Forms the main docking site for trigger factor binding to the ribosome. The chain is Large ribosomal subunit protein uL23 from Cereibacter sphaeroides (strain ATCC 17025 / ATH 2.4.3) (Rhodobacter sphaeroides).